A 364-amino-acid polypeptide reads, in one-letter code: Aminomethyltransferase (364 aa).

It belongs to the GcvT family. The glycine cleavage system is composed of four proteins: P, T, L and H.

It carries out the reaction N(6)-[(R)-S(8)-aminomethyldihydrolipoyl]-L-lysyl-[protein] + (6S)-5,6,7,8-tetrahydrofolate = N(6)-[(R)-dihydrolipoyl]-L-lysyl-[protein] + (6R)-5,10-methylene-5,6,7,8-tetrahydrofolate + NH4(+). The glycine cleavage system catalyzes the degradation of glycine. This chain is Aminomethyltransferase, found in Thermotoga petrophila (strain ATCC BAA-488 / DSM 13995 / JCM 10881 / RKU-1).